The sequence spans 99 residues: UPF0473 protein LEUM_0559 (99 aa).

It belongs to the UPF0473 family.

This is UPF0473 protein LEUM_0559 from Leuconostoc mesenteroides subsp. mesenteroides (strain ATCC 8293 / DSM 20343 / BCRC 11652 / CCM 1803 / JCM 6124 / NCDO 523 / NBRC 100496 / NCIMB 8023 / NCTC 12954 / NRRL B-1118 / 37Y).